The chain runs to 191 residues: Putative glutathione-dependent formaldehyde-activating enzyme (191 aa).

The CENP-V/GFA domain occupies 20–166 (FPGGNLYCKC…FHSLGLETYD (147 aa)). Zn(2+)-binding residues include cysteine 27, cysteine 29, cysteine 48, cysteine 50, cysteine 53, cysteine 95, and cysteine 98.

Belongs to the Gfa family. Zn(2+) serves as cofactor.

It catalyses the reaction S-(hydroxymethyl)glutathione = glutathione + formaldehyde. It participates in one-carbon metabolism; formaldehyde degradation; formate from formaldehyde (glutathione route): step 1/3. Its function is as follows. Catalyzes the condensation of formaldehyde and glutathione to S-hydroxymethylglutathione. The chain is Putative glutathione-dependent formaldehyde-activating enzyme from Aspergillus niger (strain ATCC MYA-4892 / CBS 513.88 / FGSC A1513).